We begin with the raw amino-acid sequence, 690 residues long: DNA ligase (690 aa).

Residues Asp36–Asp40, Ser85–Leu86, and Glu124 contribute to the NAD(+) site. The N6-AMP-lysine intermediate role is filled by Lys126. Positions 147, 184, 308, and 332 each coordinate NAD(+). Residues Cys426, Cys429, Cys444, and Cys449 each contribute to the Zn(2+) site. The BRCT domain occupies Asn614 to Leu690.

It belongs to the NAD-dependent DNA ligase family. LigA subfamily. Mg(2+) is required as a cofactor. It depends on Mn(2+) as a cofactor.

The enzyme catalyses NAD(+) + (deoxyribonucleotide)n-3'-hydroxyl + 5'-phospho-(deoxyribonucleotide)m = (deoxyribonucleotide)n+m + AMP + beta-nicotinamide D-nucleotide.. Functionally, DNA ligase that catalyzes the formation of phosphodiester linkages between 5'-phosphoryl and 3'-hydroxyl groups in double-stranded DNA using NAD as a coenzyme and as the energy source for the reaction. It is essential for DNA replication and repair of damaged DNA. The sequence is that of DNA ligase from Prochlorococcus marinus (strain NATL1A).